Here is a 90-residue protein sequence, read N- to C-terminus: Phosphoribosyl-ATP pyrophosphatase (90 aa).

This sequence belongs to the PRA-PH family.

The protein resides in the cytoplasm. The enzyme catalyses 1-(5-phospho-beta-D-ribosyl)-ATP + H2O = 1-(5-phospho-beta-D-ribosyl)-5'-AMP + diphosphate + H(+). Its pathway is amino-acid biosynthesis; L-histidine biosynthesis; L-histidine from 5-phospho-alpha-D-ribose 1-diphosphate: step 2/9. In Streptomyces avermitilis (strain ATCC 31267 / DSM 46492 / JCM 5070 / NBRC 14893 / NCIMB 12804 / NRRL 8165 / MA-4680), this protein is Phosphoribosyl-ATP pyrophosphatase.